A 190-amino-acid polypeptide reads, in one-letter code: Threonylcarbamoyl-AMP synthase (190 aa).

The 184-residue stretch at 7 to 190 (LSSLIKCIRK…IVNGKLIRYV (184 aa)) folds into the YrdC-like domain.

This sequence belongs to the SUA5 family. TsaC subfamily.

It localises to the cytoplasm. The enzyme catalyses L-threonine + hydrogencarbonate + ATP = L-threonylcarbamoyladenylate + diphosphate + H2O. Functionally, required for the formation of a threonylcarbamoyl group on adenosine at position 37 (t(6)A37) in tRNAs that read codons beginning with adenine. Catalyzes the conversion of L-threonine, HCO(3)(-)/CO(2) and ATP to give threonylcarbamoyl-AMP (TC-AMP) as the acyladenylate intermediate, with the release of diphosphate. This Buchnera aphidicola subsp. Schizaphis graminum (strain Sg) protein is Threonylcarbamoyl-AMP synthase.